An 897-amino-acid polypeptide reads, in one-letter code: N-terminal acetyltransferase A complex auxiliary subunit NAA15 (897 aa).

7 TPR repeats span residues 77–110 (HVCW…DPDN), 111–144 (LEIL…KPNH), 189–222 (TEMI…IVDK), 223–256 (LSYK…NPDN), 298–331 (SSAV…KGVP), 380–413 (LWTL…TPTV), and 488–523 (QCMW…YADI). Disordered stretches follow at residues 578–640 (KSTA…DPHG) and 863–897 (SRKS…SVAT). Residues 602-617 (KAEARAKKEAESKSEE) are compositionally biased toward basic and acidic residues. The segment covering 863–872 (SRKSNENGDT) has biased composition (polar residues).

Part of the NatA complex. Associates with ribosomes. Interacts with NAA10. Expressed in leaves, roots, shoots and flowers.

Its function is as follows. Auxiliary subunit of the NatA N-alpha-acetyltransferase complex. Required for male gametocyte development, embryogenesis, suspensor development and the formation of the quiescent center (QC) in the root meristem. Involved in plant immunity through the regulation of SNC1 stability. Required for embryo development. This Arabidopsis thaliana (Mouse-ear cress) protein is N-terminal acetyltransferase A complex auxiliary subunit NAA15.